The primary structure comprises 113 residues: Cell cycle protein GpsB (113 aa).

Residues 36-68 are a coiled coil; the sequence is LDMVIKDYSTFTQEIEALQAENIRLVQELDNAP.

The protein belongs to the GpsB family. Forms polymers through the coiled coil domains. Interacts with PBP1, MreC and EzrA.

Its subcellular location is the cytoplasm. Divisome component that associates with the complex late in its assembly, after the Z-ring is formed, and is dependent on DivIC and PBP2B for its recruitment to the divisome. Together with EzrA, is a key component of the system that regulates PBP1 localization during cell cycle progression. Its main role could be the removal of PBP1 from the cell pole after pole maturation is completed. Also contributes to the recruitment of PBP1 to the division complex. Not essential for septum formation. The sequence is that of Cell cycle protein GpsB from Listeria monocytogenes serotype 4b (strain CLIP80459).